The sequence spans 188 residues: Ribosome maturation factor RimP (188 aa).

It belongs to the RimP family.

The protein resides in the cytoplasm. In terms of biological role, required for maturation of 30S ribosomal subunits. The protein is Ribosome maturation factor RimP of Erythrobacter litoralis (strain HTCC2594).